A 477-amino-acid polypeptide reads, in one-letter code: Glutamate--tRNA ligase 1 (477 aa).

The 'HIGH' region motif lies at 12-22 (PSPTGALHLGN). A 'KMSKS' region motif is present at residues 253 to 257 (PLSKR). K256 contacts ATP.

Belongs to the class-I aminoacyl-tRNA synthetase family. Glutamate--tRNA ligase type 1 subfamily. In terms of assembly, monomer.

The protein localises to the cytoplasm. The catalysed reaction is tRNA(Glu) + L-glutamate + ATP = L-glutamyl-tRNA(Glu) + AMP + diphosphate. In terms of biological role, catalyzes the attachment of glutamate to tRNA(Glu) in a two-step reaction: glutamate is first activated by ATP to form Glu-AMP and then transferred to the acceptor end of tRNA(Glu). This is Glutamate--tRNA ligase 1 from Halorhodospira halophila (strain DSM 244 / SL1) (Ectothiorhodospira halophila (strain DSM 244 / SL1)).